We begin with the raw amino-acid sequence, 216 residues long: Redox-sensing transcriptional repressor Rex (216 aa).

The segment at residues 15–54 (KYLRVTQQLIEEGRDAVSSKELGDFTGINPVQVRRDLNAI) is a DNA-binding region (H-T-H motif). 89–94 (GAGNLG) lines the NAD(+) pocket.

This sequence belongs to the transcriptional regulatory Rex family. In terms of assembly, homodimer.

The protein resides in the cytoplasm. Functionally, modulates transcription in response to changes in cellular NADH/NAD(+) redox state. The sequence is that of Redox-sensing transcriptional repressor Rex from Rubrobacter xylanophilus (strain DSM 9941 / JCM 11954 / NBRC 16129 / PRD-1).